The following is a 315-amino-acid chain: MDPYELVTRNTVEVVTDEELRALIDRPVRRVYTGYEPSGEIHLGHMVTVNKLMDLQQAGFEVTVLIADLHAFLNRKGTMEEIRETAEYNRRCFEGLGLRGANYVLGSDVQLTPEYELAVLELSQAITLNRAKRSMDEVGRQMDNPTVSQMVYPIMQMVDIATLGVDAAVGGIDQRKIHMLAREHLPSIGYPAPVCIHTPIINGLDGKKMSSSAGNVISVADSEEDIKKKMKKAFCPPEVENNPVLEILRYHVFPRAGAVAIRRPEKFGGDREFAAYEDLERAYAAGEIHPLDLKNAAAAHLIDILAPVHDYVCSR.

Tyrosine 32 serves as a coordination point for L-tyrosine. A 'HIGH' region motif is present at residues 37–45 (PSGEIHLGH). L-tyrosine is bound by residues tyrosine 152, glutamine 156, aspartate 159, and glutamine 174. The 'KMSKS' region motif lies at 208–212 (KMSSS). An ATP-binding site is contributed by serine 211.

It belongs to the class-I aminoacyl-tRNA synthetase family. TyrS type 3 subfamily. Homodimer.

The protein localises to the cytoplasm. It catalyses the reaction tRNA(Tyr) + L-tyrosine + ATP = L-tyrosyl-tRNA(Tyr) + AMP + diphosphate + H(+). In terms of biological role, catalyzes the attachment of tyrosine to tRNA(Tyr) in a two-step reaction: tyrosine is first activated by ATP to form Tyr-AMP and then transferred to the acceptor end of tRNA(Tyr). The polypeptide is Tyrosine--tRNA ligase (Methanoculleus marisnigri (strain ATCC 35101 / DSM 1498 / JR1)).